The sequence spans 457 residues: tRNA-2-methylthio-N(6)-dimethylallyladenosine synthase (457 aa).

Residues K3–E120 enclose the MTTase N-terminal domain. C12, C49, C83, C157, C161, and C164 together coordinate [4Fe-4S] cluster. The 235-residue stretch at R143–R377 folds into the Radical SAM core domain. The TRAM domain occupies Q380–L447.

It belongs to the methylthiotransferase family. MiaB subfamily. In terms of assembly, monomer. It depends on [4Fe-4S] cluster as a cofactor.

Its subcellular location is the cytoplasm. It carries out the reaction N(6)-dimethylallyladenosine(37) in tRNA + (sulfur carrier)-SH + AH2 + 2 S-adenosyl-L-methionine = 2-methylsulfanyl-N(6)-dimethylallyladenosine(37) in tRNA + (sulfur carrier)-H + 5'-deoxyadenosine + L-methionine + A + S-adenosyl-L-homocysteine + 2 H(+). Functionally, catalyzes the methylthiolation of N6-(dimethylallyl)adenosine (i(6)A), leading to the formation of 2-methylthio-N6-(dimethylallyl)adenosine (ms(2)i(6)A) at position 37 in tRNAs that read codons beginning with uridine. This Burkholderia thailandensis (strain ATCC 700388 / DSM 13276 / CCUG 48851 / CIP 106301 / E264) protein is tRNA-2-methylthio-N(6)-dimethylallyladenosine synthase.